We begin with the raw amino-acid sequence, 106 residues long: Large ribosomal subunit protein cL38 (106 aa).

The transit peptide at 1 to 39 directs the protein to the chloroplast; sequence MSVSAIFGTGIVTVAASPVLRQFQVPKLGNGGGLGMVIE. The interval 42 to 70 is disordered; sequence SRPQKKSTAHHRKTRPKKTQPWDIKRKPT. The segment covering 44-59 has biased composition (basic residues); that stretch reads PQKKSTAHHRKTRPKK.

The protein belongs to the chloroplast-specific ribosomal protein cL38 family. In terms of assembly, part of the 50S ribosomal subunit.

It is found in the plastid. The protein localises to the chloroplast. In Arabidopsis thaliana (Mouse-ear cress), this protein is Large ribosomal subunit protein cL38 (PSRP6).